The chain runs to 418 residues: Tyrosine--tRNA ligase (418 aa).

L-tyrosine is bound at residue Y34. A 'HIGH' region motif is present at residues 39 to 48 (PTADSLHLGH). 2 residues coordinate L-tyrosine: Y169 and Q173. The 'KMSKS' region motif lies at 229–233 (KFGKS). K232 contributes to the ATP binding site. The region spanning 352-418 (LNLVDMLVTA…GKKKYAVLTY (67 aa)) is the S4 RNA-binding domain.

It belongs to the class-I aminoacyl-tRNA synthetase family. TyrS type 1 subfamily. In terms of assembly, homodimer.

Its subcellular location is the cytoplasm. The catalysed reaction is tRNA(Tyr) + L-tyrosine + ATP = L-tyrosyl-tRNA(Tyr) + AMP + diphosphate + H(+). Its function is as follows. Catalyzes the attachment of tyrosine to tRNA(Tyr) in a two-step reaction: tyrosine is first activated by ATP to form Tyr-AMP and then transferred to the acceptor end of tRNA(Tyr). The sequence is that of Tyrosine--tRNA ligase from Streptococcus pyogenes serotype M6 (strain ATCC BAA-946 / MGAS10394).